A 1492-amino-acid chain; its full sequence is Cystic fibrosis transmembrane conductance regulator (1492 aa).

Topologically, residues 1-78 (MQRSPIEKAN…KLVNALRRCF (78 aa)) are cytoplasmic. The chain crosses the membrane as a helical span at residues 79-99 (FWRFLFYGILLYFVEFTKAVQ). The 285-residue stretch at 82 to 366 (FLFYGILLYF…SAIQTWYDSL (285 aa)) folds into the ABC transmembrane type-1 1 domain. Over 100–123 (PLCLGRIIASYNAKNTYEREIAYY) the chain is Extracellular. Residues 124–147 (LALGLCLLFVVRTLFLHPAVFGLQ) form a helical membrane-spanning segment. Residues 148–196 (HLGMQMRIALFSLIYKKILKMSSRVLDKIDTGQLVSLLSNNLNKFDEGV) lie on the Cytoplasmic side of the membrane. Residues 197-217 (AVAHFVWIAPVQVVLLMGLIW) form a helical membrane-spanning segment. Residues 218–223 (NELTEF) are Extracellular-facing. A helical transmembrane segment spans residues 224–244 (VFCGLGFLIMLALFQAWLGKK). Topologically, residues 245-299 (MMQYRDKRAGKINERLAITSEIIDNIQSVKVYCWEDAMEKIIDDIRQVELKLTRK) are cytoplasmic. Residues 300-320 (VAYCRYFSSSAFFFSGFFVVF) form a helical membrane-spanning segment. At 321-340 (LSVVPYAFIHTIKLRRIFTT) the chain is on the extracellular side. The helical transmembrane segment at 341-359 (ISYNIVLRMTVTRQFPSAI) threads the bilayer. Residues 360–867 (QTWYDSLGAI…YLRYVTTNRN (508 aa)) are Cytoplasmic-facing. ATP contacts are provided by residues tryptophan 402, serine 435, 459 to 466 (GSTGSGKS), and glutamine 494. The ABC transporter 1 domain maps to 424-647 (NGDDGLFFSN…KPDFSSQLLG (224 aa)). Residues 655–840 (SAERRNSILT…EEINEEDLKE (186 aa)) form a disordered R region region. The chain crosses the membrane as a helical span at residues 868-888 (LVFVLILCLVIFLAEVAASLA). One can recognise an ABC transmembrane type-1 2 domain in the interval 868 to 1169 (LVFVLILCLV…AVNSSIDVDG (302 aa)). The Extracellular portion of the chain corresponds to 889 to 932 (GLWIISGLAINTGSQTNDTSTDLSHLSVFSKFITNGSHYYIFYI). N-linked (GlcNAc...) asparagine glycosylation is found at asparagine 905 and asparagine 923. The chain crosses the membrane as a discontinuously helical span at residues 933–953 (YVGLADSFLALGVIRGLPLVH). The Cytoplasmic segment spans residues 954 to 1004 (TLVTVSKDLHKQMLHSVLQGPMTAFNKMKAGRILNRFIKDTAIIDDMLPLT). A helical transmembrane segment spans residues 1005 to 1025 (VFDFVQLILIVVGAICVVSVL). At 1026 to 1027 (QP) the chain is on the extracellular side. Residues 1028-1048 (YTLLAAIPVAVIFIMLRAYFL) form a helical membrane-spanning segment. The Cytoplasmic segment spans residues 1049–1109 (RTSQQLKQLE…TANWFLYLST (61 aa)). The chain crosses the membrane as a helical span at residues 1110 to 1130 (LRWFQMRIDIVFVLFFIAVTF). The Extracellular portion of the chain corresponds to 1131-1144 (IAIATHDVGEGQVG). The helical transmembrane segment at 1145–1165 (IILTLAMNITSTLQWAVNSSI) threads the bilayer. Residues 1166-1492 (DVDGLMRSVS…AEEDLQETRL (327 aa)) are Cytoplasmic-facing. In terms of domain architecture, ABC transporter 2 spans 1220–1453 (MMVNNLTAKY…ASLFKQVFGH (234 aa)). ATP is bound by residues tyrosine 1229 and 1254–1261 (GRTGAGKS). Residues 1465-1474 (RNSSKRKTRP) are compositionally biased toward basic residues. The interval 1465–1492 (RNSSKRKTRPKISALQEEAEEDLQETRL) is disordered. The span at 1481-1492 (EEAEEDLQETRL) shows a compositional bias: acidic residues. Positions 1483–1485 (AEE) match the PDZ-binding motif.

It belongs to the ABC transporter superfamily. ABCC family. CFTR transporter (TC 3.A.1.202) subfamily. Monomer; does not require oligomerization for channel activity. May form oligomers in the membrane. In terms of processing, phosphorylated; cAMP treatment promotes phosphorylation and activates the channel. Dephosphorylation decreases the ATPase activity (in vitro). Phosphorylation at PKA sites activates the channel. Phosphorylation at PKC sites enhances the response to phosphorylation by PKA. As to expression, expressed in the rectal gland (at protein level).

The protein resides in the apical cell membrane. It localises to the early endosome membrane. It is found in the cell membrane. The protein localises to the recycling endosome membrane. Its subcellular location is the endoplasmic reticulum membrane. It catalyses the reaction ATP + H2O + closed Cl(-) channel = ADP + phosphate + open Cl(-) channel.. The catalysed reaction is chloride(in) = chloride(out). The enzyme catalyses hydrogencarbonate(in) = hydrogencarbonate(out). It carries out the reaction ATP + H2O = ADP + phosphate + H(+). Epithelial ion channel that plays an important role in the regulation of epithelial ion and water transport and fluid homeostasis. Mediates the transport of chloride ions across the cell membrane. Possesses an intrinsic ATPase activity and utilizes ATP to gate its channel; the passive flow of anions through the channel is gated by cycles of ATP binding and hydrolysis by the ATP-binding domains. The ion channel is also permeable to HCO(3)(-); selectivity depends on the extracellular chloride concentration. Exerts its function also by modulating the activity of other ion channels and transporters. Contributes to the regulation of the pH and the ion content of the epithelial fluid layer. This chain is Cystic fibrosis transmembrane conductance regulator, found in Squalus acanthias (Spiny dogfish).